Here is a 458-residue protein sequence, read N- to C-terminus: ATP synthase subunit beta (458 aa).

148–155 lines the ATP pocket; that stretch reads GGAGVGKT.

This sequence belongs to the ATPase alpha/beta chains family. As to quaternary structure, F-type ATPases have 2 components, CF(1) - the catalytic core - and CF(0) - the membrane proton channel. CF(1) has five subunits: alpha(3), beta(3), gamma(1), delta(1), epsilon(1). CF(0) has three main subunits: a(1), b(2) and c(9-12). The alpha and beta chains form an alternating ring which encloses part of the gamma chain. CF(1) is attached to CF(0) by a central stalk formed by the gamma and epsilon chains, while a peripheral stalk is formed by the delta and b chains.

The protein resides in the cell inner membrane. The enzyme catalyses ATP + H2O + 4 H(+)(in) = ADP + phosphate + 5 H(+)(out). Its function is as follows. Produces ATP from ADP in the presence of a proton gradient across the membrane. The catalytic sites are hosted primarily by the beta subunits. In Shewanella loihica (strain ATCC BAA-1088 / PV-4), this protein is ATP synthase subunit beta.